A 211-amino-acid chain; its full sequence is Protein-L-isoaspartate O-methyltransferase (211 aa).

The active site involves serine 60.

Belongs to the methyltransferase superfamily. L-isoaspartyl/D-aspartyl protein methyltransferase family.

The protein localises to the cytoplasm. The catalysed reaction is [protein]-L-isoaspartate + S-adenosyl-L-methionine = [protein]-L-isoaspartate alpha-methyl ester + S-adenosyl-L-homocysteine. Its function is as follows. Catalyzes the methyl esterification of L-isoaspartyl residues in peptides and proteins that result from spontaneous decomposition of normal L-aspartyl and L-asparaginyl residues. It plays a role in the repair and/or degradation of damaged proteins. The sequence is that of Protein-L-isoaspartate O-methyltransferase from Pseudomonas syringae pv. tomato (strain ATCC BAA-871 / DC3000).